Consider the following 187-residue polypeptide: Calmodulin-like protein 1 (187 aa).

Ala-2 bears the N-acetylalanine mark. EF-hand domains lie at Glu-8–Asn-43, Pro-44–Asp-79, Asp-81–Arg-116, and Leu-117–Arg-152. Positions 21, 23, 25, 27, 32, 57, 59, 61, 63, 68, 94, 96, 98, 105, 130, 132, 134, 136, and 141 each coordinate Ca(2+). The disordered stretch occupies residues Lys-153–Leu-187. Basic and acidic residues predominate over residues Arg-154 to Ser-165. Low complexity predominate over residues Ser-169–Ser-178. Cys-184 bears the Cysteine methyl ester mark. Cys-184 is lipidated: S-farnesyl cysteine. A propeptide spans Val-185 to Leu-187 (removed in mature form).

It belongs to the calmodulin family.

It is found in the membrane. In terms of biological role, calcium-binding protein that binds and activates CAMK1, a calcium/calmodulin-dependent kinase. This is Calmodulin-like protein 1 (CML1) from Oryza sativa subsp. japonica (Rice).